The sequence spans 146 residues: VHLSGEEKAAVTGLWGKVKVDEVGGEALGRLLVVYPWTQRFFDSFGDLSSASAVMGNPKVKAHGKKVLDSFSEGLQHLDNLKGTFAKLSELHCDKLHVDPENFRLLGNVLVCVLARHFGKEFTPQVQAAYQKVVAGVANALAHKYH.

Val-1 is modified (N-acetylvaline). The Globin domain occupies 2–146; the sequence is HLSGEEKAAV…VANALAHKYH (145 aa). Residue Thr-12 is modified to Phosphothreonine. The residue at position 44 (Ser-44) is a Phosphoserine. At Lys-59 the chain carries N6-acetyllysine. Heme b is bound at residue His-63. N6-acetyllysine is present on Lys-82. His-92 serves as a coordination point for heme b. An S-nitrosocysteine modification is found at Cys-93. Residue Lys-144 is modified to N6-acetyllysine.

The protein belongs to the globin family. In terms of assembly, heterotetramer of two alpha chains and two beta chains. Red blood cells.

In terms of biological role, involved in oxygen transport from the lung to the various peripheral tissues. The sequence is that of Hemoglobin subunit beta (HBB) from Pteropus alecto (Black flying fox).